The sequence spans 321 residues: Endoglucanase 1 (321 aa).

The N-terminal stretch at Met-1–Ala-27 is a signal peptide. Residue Asp-110 is part of the active site. Cys-112 and Cys-156 form a disulfide bridge. Asp-149 acts as the Proton donor in catalysis. Asp-295 serves as the catalytic Nucleophile.

This sequence belongs to the glycosyl hydrolase 6 (cellulase B) family.

It carries out the reaction Endohydrolysis of (1-&gt;4)-beta-D-glucosidic linkages in cellulose, lichenin and cereal beta-D-glucans.. Its function is as follows. Implicated in the mechanism of induction exerted by cellobiose. The chain is Endoglucanase 1 (celA1) from Streptomyces halstedii.